We begin with the raw amino-acid sequence, 307 residues long: Methionyl-tRNA formyltransferase (307 aa).

S108 to P111 provides a ligand contact to (6S)-5,6,7,8-tetrahydrofolate.

The protein belongs to the Fmt family.

The enzyme catalyses L-methionyl-tRNA(fMet) + (6R)-10-formyltetrahydrofolate = N-formyl-L-methionyl-tRNA(fMet) + (6S)-5,6,7,8-tetrahydrofolate + H(+). In terms of biological role, attaches a formyl group to the free amino group of methionyl-tRNA(fMet). The formyl group appears to play a dual role in the initiator identity of N-formylmethionyl-tRNA by promoting its recognition by IF2 and preventing the misappropriation of this tRNA by the elongation apparatus. This chain is Methionyl-tRNA formyltransferase, found in Renibacterium salmoninarum (strain ATCC 33209 / DSM 20767 / JCM 11484 / NBRC 15589 / NCIMB 2235).